A 316-amino-acid polypeptide reads, in one-letter code: MKWYEVRVSTTDEASDAVSEMLTTMGAGGVAIKDPFDIKKEILKPNSLDYADDEFLESLGEDVVIQAYFQSGNDIDKLLKQINEGLVNISQFLNIGKGLEGYNEVDDEDWSTAWKKYYKPLQLTDRIVIKPTWEDYSPNADEIVIQMDPGMAFGTGTHETTQMCSILLDKYMKDDTEVLDIGCGTGILSIIAAKLGAKQVEAIDIDEVAVKVARENIELNQEITKVSARKAVLSDLKAEEHKYDIIVANIIANVIIDLSSQIPYYLKKESLFITSGIIKERKQEVIDACEKNGMSRIETLEMGEWVAMVFKCPDTL.

Thr-161, Gly-182, Asp-204, and Asn-249 together coordinate S-adenosyl-L-methionine.

This sequence belongs to the methyltransferase superfamily. PrmA family.

It localises to the cytoplasm. It carries out the reaction L-lysyl-[protein] + 3 S-adenosyl-L-methionine = N(6),N(6),N(6)-trimethyl-L-lysyl-[protein] + 3 S-adenosyl-L-homocysteine + 3 H(+). In terms of biological role, methylates ribosomal protein L11. This chain is Ribosomal protein L11 methyltransferase, found in Ruminiclostridium cellulolyticum (strain ATCC 35319 / DSM 5812 / JCM 6584 / H10) (Clostridium cellulolyticum).